The primary structure comprises 1063 residues: Structural polyprotein (1063 aa).

The disordered stretch occupies residues 1 to 131 (MASTTPITME…LGPPTNPFQA (131 aa)). The segment at 30–69 (GASQSRRPRPPRQRDSSTSGDDSGRDSGGPRRRRGNRGRG) is human C1QBP/SF2P32-binding. Position 46 is a phosphoserine; by host (Ser46). Over residues 70–87 (QLRDWSRAPPPPEERQES) the composition is skewed to basic and acidic residues. The segment covering 93-107 (APKPSRAPPQQPQPP) has biased composition (pro residues). Residues Cys153 and Cys197 are joined by a disulfide bond. The segment at 279–300 (GAPQAFLAGLLLAAVAVGTARA) is functions as E2 signal peptide. The Extracellular segment spans residues 301–534 (GLQPRADMAA…LWLATANALS (234 aa)). Asn353, Asn371, Asn410, and Asn429 each carry an N-linked (GlcNAc...) asparagine; by host glycan. The helical transmembrane segment at 535–555 (LDHALAAFVLLVPWVLIFMVC) threads the bilayer. Topologically, residues 556 to 582 (RRACRRRGAAAALTAVVLQGYNPPAYG) are cytoplasmic. The interval 563 to 582 (GAAAALTAVVLQGYNPPAYG) is functions as E1 signal peptide. Residues 583-1028 (EEAFTYLCTA…QTWAEWAAAH (446 aa)) are Extracellular-facing. 8 cysteine pairs are disulfide-bonded: Cys590–Cys595, Cys619–Cys824, Cys641–Cys653, Cys699–Cys712, Cys758–Cys767, Cys807–Cys817, Cys931–Cys934, and Cys950–Cys983. Residue Asn658 is glycosylated (N-linked (GlcNAc...) asparagine; by host). Ca(2+) contacts are provided by Asn670 and Ala671. Ca(2+) is bound by residues Asp718 and Thr719. N-linked (GlcNAc...) asparagine; by host glycosylation is found at Asn759 and Asn791. O-linked (GalNAc...) threonine; by host glycosylation is found at Thr1011 and Thr1012. The helical transmembrane segment at 1029 to 1049 (WWQLTLGAICALLLAGLLACC) threads the bilayer. Residues 1050–1063 (AKCLYYLRGAIAPR) are Extracellular-facing.

In terms of assembly, homodimer; further assembles into homooligomer. Interacts with human C1QBP. Interacts (via N-terminus) with protease/methyltransferase p150. As to quaternary structure, heterodimer with spike glycoprotein E2. Heterodimer with spike glycoprotein E1. Post-translationally, structural polyprotein: Specific enzymatic cleavages in vivo yield mature proteins. Two signal peptidase-mediated cleavages within the polyprotein produce the structural proteins capsid, E2, and E1. The E2 signal peptide remains attached to the C-terminus of the capsid protein after cleavage by the signal peptidase. Another signal peptide at E2 C-terminus directs E1 to the ER, with a similar mechanism. In terms of processing, contains three N-linked oligosaccharides. Capsid is phosphorylated on Ser-46 by host. This phosphorylation negatively regulates capsid protein RNA-binding activity. Dephosphorylated by human PP1A.

The protein localises to the virion. The protein resides in the host cytoplasm. It is found in the host mitochondrion. It localises to the virion membrane. Its subcellular location is the host Golgi apparatus membrane. Capsid protein interacts with genomic RNA and assembles into icosahedric core particles 65-70 nm in diameter. The resulting nucleocapsid eventually associates with the cytoplasmic domain of E2 at the cell membrane, leading to budding and formation of mature virions from host Golgi membranes. Phosphorylation negatively regulates RNA-binding activity, possibly delaying virion assembly during the viral replication phase. Capsid protein dimerizes and becomes disulfide-linked in the virion. Modulates genomic RNA replication. Modulates subgenomic RNA synthesis by interacting with human C1QBP/SF2P32. Induces both perinuclear clustering of mitochondria and the formation of electron-dense intermitochondrial plaques, both hallmarks of rubella virus infected cells. Induces apoptosis when expressed in transfected cells. Its function is as follows. Responsible for viral attachment to target host cell, by binding to the cell receptor. Its transport to the plasma membrane depends on interaction with E1 protein. The surface glycoproteins display an irregular helical organization and a pseudo-tetrameric inner nucleocapsid arrangement. In terms of biological role, class II viral fusion protein. Fusion activity is inactive as long as E1 is bound to E2 in mature virion. After virus attachment to target cell and clathrin-mediated endocytosis, acidification of the endosome would induce dissociation of E1/E2 heterodimer and concomitant trimerization of the E1 subunits. This E1 homotrimer is fusion active, and promotes release of viral nucleocapsid in cytoplasm after endosome and viral membrane fusion. The cytoplasmic tail of spike glycoprotein E1 modulates virus release. The surface glycoproteins display an irregular helical organization and a pseudo-tetrameric inner nucleocapsid arrangement. The sequence is that of Structural polyprotein from Homo sapiens (Human).